A 252-amino-acid chain; its full sequence is Hydrolase phiM (252 aa).

The active-site Charge relay system is S126.

This sequence belongs to the LovG family.

Its pathway is secondary metabolite biosynthesis. Its function is as follows. Hydrolase; part of the gene cluster that mediates the biosynthesis of the antihypercholesterolemic agents phomoidrides which are dimeric anhydrides. Within the pathway, phiM releases the C12-fatty acyl chain from phiA. The pathway begins with the highly reducing polyketide synthase tstA that catalyzes the formation of a C12-fatty acyl-ACP, starting from one acetate and 5 malonate units. The hydrolase tstM is involved in the release of the C12-fatty acyl chain from phiA. The alkylcitrate synthase (ACS) tstJ and the alkylcitrate dehydratase (ACDH) tstI then give rise to decarboxylated monomeric anhydrides by coupling the C12-fatty acyl chain with oxalacetic acid. The cyclase tstC is responsible for the dimerization of the monomeric anhydrides which leads to the production of prephomoidride that contains the characteristic bicyclo[4.3.1]deca-1,6-diene system of phomoidrides. Iterative oxidation catalyzed by the alpha-ketoglutarate-dependent dioxygenase tstK produced then phomoidride A. Finally, the methyltransferase tstE converts phomoidride A to phomoidride B via an acetalization reaction. The phosphatidylethanolamine-binding protein tstB and tstN are not essential for dimerization and their functions have still to be determined. This Talaromyces stipitatus (strain ATCC 10500 / CBS 375.48 / QM 6759 / NRRL 1006) (Penicillium stipitatum) protein is Hydrolase phiM.